The following is a 92-amino-acid chain: Kinetoplastid membrane protein 11B (92 aa).

It belongs to the KMP-11 family. Monomer.

Its subcellular location is the cytoplasm. The protein resides in the cytoskeleton. It localises to the cell projection. The protein localises to the cilium. It is found in the flagellum. Its function is as follows. May be involved in the regulation of the cytoskeleton through interaction with the subpellicular microtubules. May be involved in parasite mobility and attachment to the surface of the host cell. Behaves as a strong immunogen during infection. This Leishmania infantum protein is Kinetoplastid membrane protein 11B (KMP-11B).